The sequence spans 341 residues: tRNA uridine(34) hydroxylase (341 aa).

Residues 139–233 (SDPEVVLVDT…YLEEVPSTET (95 aa)) enclose the Rhodanese domain. Residue C193 is the Cysteine persulfide intermediate of the active site. 2 stretches are compositionally biased toward basic and acidic residues: residues 306-316 (SLAEERGESHI) and 324-341 (IEER…QANK). Residues 306 to 341 (SLAEERGESHIGGDIQNIIEERRQEKNDKKAKQANK) form a disordered region.

It belongs to the TrhO family.

It carries out the reaction uridine(34) in tRNA + AH2 + O2 = 5-hydroxyuridine(34) in tRNA + A + H2O. Its function is as follows. Catalyzes oxygen-dependent 5-hydroxyuridine (ho5U) modification at position 34 in tRNAs. The protein is tRNA uridine(34) hydroxylase of Colwellia psychrerythraea (strain 34H / ATCC BAA-681) (Vibrio psychroerythus).